A 421-amino-acid chain; its full sequence is CinA-like protein (421 aa).

It belongs to the CinA family.

This Mycobacterium sp. (strain JLS) protein is CinA-like protein.